The primary structure comprises 87 residues: Small ribosomal subunit protein uS17 (87 aa).

It belongs to the universal ribosomal protein uS17 family. In terms of assembly, part of the 30S ribosomal subunit.

Functionally, one of the primary rRNA binding proteins, it binds specifically to the 5'-end of 16S ribosomal RNA. This Bacillus pumilus (strain SAFR-032) protein is Small ribosomal subunit protein uS17.